The sequence spans 76 residues: MAVEKFETALKKLEDVVNRLESGELSLDDSLKAFEEGVKMAAFCTKKLDEAEKKVEILLKKKDGSFAKEPFRLEDD.

The protein belongs to the XseB family. In terms of assembly, heterooligomer composed of large and small subunits.

The protein resides in the cytoplasm. It carries out the reaction Exonucleolytic cleavage in either 5'- to 3'- or 3'- to 5'-direction to yield nucleoside 5'-phosphates.. In terms of biological role, bidirectionally degrades single-stranded DNA into large acid-insoluble oligonucleotides, which are then degraded further into small acid-soluble oligonucleotides. The chain is Exodeoxyribonuclease 7 small subunit from Geobacter metallireducens (strain ATCC 53774 / DSM 7210 / GS-15).